The sequence spans 480 residues: Glutamyl-tRNA(Gln) amidotransferase subunit A (480 aa).

Residues lysine 70 and serine 145 each act as charge relay system in the active site. The active-site Acyl-ester intermediate is the serine 169.

It belongs to the amidase family. GatA subfamily. As to quaternary structure, heterotrimer of A, B and C subunits.

It catalyses the reaction L-glutamyl-tRNA(Gln) + L-glutamine + ATP + H2O = L-glutaminyl-tRNA(Gln) + L-glutamate + ADP + phosphate + H(+). Functionally, allows the formation of correctly charged Gln-tRNA(Gln) through the transamidation of misacylated Glu-tRNA(Gln) in organisms which lack glutaminyl-tRNA synthetase. The reaction takes place in the presence of glutamine and ATP through an activated gamma-phospho-Glu-tRNA(Gln). The chain is Glutamyl-tRNA(Gln) amidotransferase subunit A from Lactobacillus delbrueckii subsp. bulgaricus (strain ATCC BAA-365 / Lb-18).